The chain runs to 217 residues: Ribosomal RNA small subunit methyltransferase G (217 aa).

S-adenosyl-L-methionine-binding positions include G79, L84, 102 to 104 (DST), 130 to 131 (VE), and R144.

This sequence belongs to the methyltransferase superfamily. RNA methyltransferase RsmG family.

The protein resides in the cytoplasm. In terms of biological role, specifically methylates the N7 position of a guanine in 16S rRNA. The chain is Ribosomal RNA small subunit methyltransferase G from Chlorobaculum tepidum (strain ATCC 49652 / DSM 12025 / NBRC 103806 / TLS) (Chlorobium tepidum).